Consider the following 178-residue polypeptide: Inner membrane-spanning protein YciB (178 aa).

Helical transmembrane passes span 12-32 (LFFA…VAIV), 50-70 (PMQW…LVLH), 74-94 (FIMW…LISD), 120-140 (LTFA…FVAF), and 145-165 (AVWV…FVLA).

This sequence belongs to the YciB family.

It is found in the cell inner membrane. Its function is as follows. Plays a role in cell envelope biogenesis, maintenance of cell envelope integrity and membrane homeostasis. This is Inner membrane-spanning protein YciB from Laribacter hongkongensis (strain HLHK9).